The sequence spans 94 residues: Small ribosomal subunit protein bS18 (94 aa).

Belongs to the bacterial ribosomal protein bS18 family. Part of the 30S ribosomal subunit. Forms a tight heterodimer with protein bS6.

Its function is as follows. Binds as a heterodimer with protein bS6 to the central domain of the 16S rRNA, where it helps stabilize the platform of the 30S subunit. This is Small ribosomal subunit protein bS18 from Acetivibrio thermocellus (strain ATCC 27405 / DSM 1237 / JCM 9322 / NBRC 103400 / NCIMB 10682 / NRRL B-4536 / VPI 7372) (Clostridium thermocellum).